The following is a 264-amino-acid chain: MFVPCGESVPDLTNFTLLMPAVSVGNVGQLAIDLIISTLNMCKIGYFYTDCLVPMVGNNPYATEEENSNELSINTEVYSLPSKKLVVLQLRSIFIKYKSKSFCEKLLAWVESSGCARIIVLSSSHSYHRNDAQLRSTPFRYLLTPCLQKSVQNKIKSLNWLEMEKSRCIPEMSDSEFCIRIPGGGITKTLYDESCSKEIQMAVLLKFVSEGDNIPDAVSLVEYLNEWLQIIKPCNDGPMASALPWKIPSSWRLLFGSGLPPALF.

Threonine 137 is modified (phosphothreonine).

This sequence belongs to the PSMG2 family. As to quaternary structure, forms a heterodimer with PSMG1. The PSMG1-PSMG2 heterodimer interacts directly with the PSMA5 and PSMA7 proteasome alpha subunits. Post-translationally, degraded by the proteasome upon completion of 20S proteasome maturation.

The protein localises to the nucleus. Functionally, chaperone protein which promotes assembly of the 20S proteasome as part of a heterodimer with PSMG1. The PSMG1-PSMG2 heterodimer binds to the PSMA5 and PSMA7 proteasome subunits, promotes assembly of the proteasome alpha subunits into the heteroheptameric alpha ring and prevents alpha ring dimerization. This chain is Proteasome assembly chaperone 2, found in Mus musculus (Mouse).